We begin with the raw amino-acid sequence, 151 residues long: Mini-ribonuclease 3 (151 aa).

D30 is a catalytic residue.

This sequence belongs to the MrnC RNase family. In terms of assembly, homodimer. Mg(2+) is required as a cofactor.

The protein localises to the cytoplasm. In terms of biological role, involved in correct processing of both the 5' and 3' ends of 23S rRNA precursor. Processes 30S rRNA precursor transcript even in absence of ribonuclease 3 (Rnc); Rnc processes 30S rRNA into smaller rRNA precursors. In Thermosynechococcus vestitus (strain NIES-2133 / IAM M-273 / BP-1), this protein is Mini-ribonuclease 3.